Reading from the N-terminus, the 580-residue chain is Formate--tetrahydrofolate ligase (580 aa).

Thr-83 to Thr-90 is a binding site for ATP.

This sequence belongs to the formate--tetrahydrofolate ligase family.

It carries out the reaction (6S)-5,6,7,8-tetrahydrofolate + formate + ATP = (6R)-10-formyltetrahydrofolate + ADP + phosphate. It functions in the pathway one-carbon metabolism; tetrahydrofolate interconversion. This Haloquadratum walsbyi (strain DSM 16790 / HBSQ001) protein is Formate--tetrahydrofolate ligase.